The sequence spans 459 residues: Glutathione reductase (459 aa).

7 residues coordinate FAD: serine 14, glycine 15, glutamate 34, threonine 41, cysteine 42, lysine 50, and alanine 114. Serine 14 is a binding site for glutathione. Residues cysteine 42 and cysteine 47 are joined by a disulfide bond. Residues isoleucine 177, glutamate 180, arginine 197, lysine 203, and glycine 262 each contribute to the NADP(+) site. Positions 313 and 321 each coordinate FAD. Arginine 329 contacts glutathione. Alanine 351 lines the NADP(+) pocket. Histidine 448 contributes to the FAD binding site. The Proton acceptor role is filled by histidine 448.

The protein belongs to the class-I pyridine nucleotide-disulfide oxidoreductase family. As to quaternary structure, homodimer. It depends on FAD as a cofactor.

It localises to the cytoplasm. It carries out the reaction 2 glutathione + NADP(+) = glutathione disulfide + NADPH + H(+). Catalyzes the reduction of glutathione disulfide (GSSG) to reduced glutathione (GSH). Constitutes the major mechanism to maintain a high GSH:GSSG ratio in the cytosol. This is Glutathione reductase (gor) from Nostoc sp. (strain PCC 7120 / SAG 25.82 / UTEX 2576).